The following is a 271-amino-acid chain: MSSHADSKPWTVPALAQAKREGRKLVMLTAYDAGFARTFDAHGVDLILVGDSLGMVVQGHDSTLPVTTADMVYHTAAVARALDRALLVADLSFQADATPERALDAATQLLQAGAEMVKIEGAGHKLEVIRYLVEREIPVCSHLGLTPQSVLRFGGYKVQGRGEAGEQLRRDAQAVVDAGASLLVLECVPTPIATQISADLSVPTIGIGAGPGCDGQVLVMHDMLGLDSGHRRPKFVKDFLAEGGSVAGAVRAYAQAVRDGSFPDAEHAYAA.

The Mg(2+) site is built by aspartate 51 and aspartate 90. 3-methyl-2-oxobutanoate-binding positions include 51 to 52 (DS), aspartate 90, and lysine 118. Glutamate 120 provides a ligand contact to Mg(2+). The active-site Proton acceptor is the glutamate 186.

It belongs to the PanB family. In terms of assembly, homodecamer; pentamer of dimers. It depends on Mg(2+) as a cofactor.

The protein resides in the cytoplasm. The enzyme catalyses 3-methyl-2-oxobutanoate + (6R)-5,10-methylene-5,6,7,8-tetrahydrofolate + H2O = 2-dehydropantoate + (6S)-5,6,7,8-tetrahydrofolate. The protein operates within cofactor biosynthesis; (R)-pantothenate biosynthesis; (R)-pantoate from 3-methyl-2-oxobutanoate: step 1/2. Functionally, catalyzes the reversible reaction in which hydroxymethyl group from 5,10-methylenetetrahydrofolate is transferred onto alpha-ketoisovalerate to form ketopantoate. This is 3-methyl-2-oxobutanoate hydroxymethyltransferase from Xanthomonas euvesicatoria pv. vesicatoria (strain 85-10) (Xanthomonas campestris pv. vesicatoria).